The primary structure comprises 342 residues: tRNA N6-adenosine threonylcarbamoyltransferase (342 aa).

Residues His115 and His119 each contribute to the Fe cation site. Substrate-binding positions include 137–141 (IVSGG), Asp170, Gly183, Asp187, and Asn276. Asp304 provides a ligand contact to Fe cation.

This sequence belongs to the KAE1 / TsaD family. Requires Fe(2+) as cofactor.

The protein localises to the cytoplasm. The enzyme catalyses L-threonylcarbamoyladenylate + adenosine(37) in tRNA = N(6)-L-threonylcarbamoyladenosine(37) in tRNA + AMP + H(+). Functionally, required for the formation of a threonylcarbamoyl group on adenosine at position 37 (t(6)A37) in tRNAs that read codons beginning with adenine. Is involved in the transfer of the threonylcarbamoyl moiety of threonylcarbamoyl-AMP (TC-AMP) to the N6 group of A37, together with TsaE and TsaB. TsaD likely plays a direct catalytic role in this reaction. This is tRNA N6-adenosine threonylcarbamoyltransferase from Staphylococcus saprophyticus subsp. saprophyticus (strain ATCC 15305 / DSM 20229 / NCIMB 8711 / NCTC 7292 / S-41).